The following is a 119-amino-acid chain: Small ribosomal subunit protein uS13 (119 aa).

The span at 94 to 113 shows a compositional bias: basic residues; it reads GLPVRGQRTKTNARTRKGPR. The disordered stretch occupies residues 94–119; that stretch reads GLPVRGQRTKTNARTRKGPRKAIGAK.

It belongs to the universal ribosomal protein uS13 family. In terms of assembly, part of the 30S ribosomal subunit. Forms a loose heterodimer with protein S19. Forms two bridges to the 50S subunit in the 70S ribosome.

Located at the top of the head of the 30S subunit, it contacts several helices of the 16S rRNA. In the 70S ribosome it contacts the 23S rRNA (bridge B1a) and protein L5 of the 50S subunit (bridge B1b), connecting the 2 subunits; these bridges are implicated in subunit movement. Contacts the tRNAs in the A and P-sites. The chain is Small ribosomal subunit protein uS13 from Nitrosomonas europaea (strain ATCC 19718 / CIP 103999 / KCTC 2705 / NBRC 14298).